Reading from the N-terminus, the 156-residue chain is 6,7-dimethyl-8-ribityllumazine synthase (156 aa).

Residues phenylalanine 22, 57–59 (AVE), and 81–83 (TVI) contribute to the 5-amino-6-(D-ribitylamino)uracil site. 86 to 87 (GT) serves as a coordination point for (2S)-2-hydroxy-3-oxobutyl phosphate. The active-site Proton donor is histidine 89. A 5-amino-6-(D-ribitylamino)uracil-binding site is contributed by phenylalanine 114. Arginine 128 lines the (2S)-2-hydroxy-3-oxobutyl phosphate pocket.

Belongs to the DMRL synthase family. Forms an icosahedral capsid composed of 60 subunits, arranged as a dodecamer of pentamers.

The enzyme catalyses (2S)-2-hydroxy-3-oxobutyl phosphate + 5-amino-6-(D-ribitylamino)uracil = 6,7-dimethyl-8-(1-D-ribityl)lumazine + phosphate + 2 H2O + H(+). The protein operates within cofactor biosynthesis; riboflavin biosynthesis; riboflavin from 2-hydroxy-3-oxobutyl phosphate and 5-amino-6-(D-ribitylamino)uracil: step 1/2. Functionally, catalyzes the formation of 6,7-dimethyl-8-ribityllumazine by condensation of 5-amino-6-(D-ribitylamino)uracil with 3,4-dihydroxy-2-butanone 4-phosphate. This is the penultimate step in the biosynthesis of riboflavin. This is 6,7-dimethyl-8-ribityllumazine synthase from Vibrio campbellii (strain ATCC BAA-1116).